The chain runs to 387 residues: Cytochrome b (387 aa).

Helical transmembrane passes span 32 to 52, 76 to 98, 113 to 133, and 179 to 199; these read FGSLLACVLVIQIVIGILLAC, FLLRAFHANGASFFFIFLYLHIG, TWNIGVIIFLLTIITAFLGYC, and FFSLHYLMPFVIAALSVMHLI. Histidine 82 and histidine 96 together coordinate heme b. Residues histidine 183 and histidine 197 each contribute to the heme b site. Histidine 202 lines the a ubiquinone pocket. 4 consecutive transmembrane segments (helical) span residues 225-245, 289-309, 321-341, and 348-368; these read YLIKDLITIFIFLIGINYMAF, QLGVIAMLLSILVLLLLPLLD, FGKFFFWTFVADFVILAWIGG, and FITIGAIATIFYFSYFFILIP.

The protein belongs to the cytochrome b family. Fungal cytochrome b-c1 complex contains 10 subunits; 3 respiratory subunits, 2 core proteins and 5 low-molecular weight proteins. Cytochrome b-c1 complex is a homodimer. Heme b is required as a cofactor.

It is found in the mitochondrion inner membrane. In terms of biological role, component of the ubiquinol-cytochrome c reductase complex (complex III or cytochrome b-c1 complex) that is part of the mitochondrial respiratory chain. The b-c1 complex mediates electron transfer from ubiquinol to cytochrome c. Contributes to the generation of a proton gradient across the mitochondrial membrane that is then used for ATP synthesis. This Schizosaccharomyces pombe (strain 972 / ATCC 24843) (Fission yeast) protein is Cytochrome b (cob).